The following is a 425-amino-acid chain: MNIISVGVNHKTAPIEIRERISLSEVQNKEFVTGLVSAGIAHEAMVLSTCNRTEIYVVPAMHEVTGEYLKDYIISFREAGKDVRPEHFFSRFYCGTARHLFEVSSAIDSLILGEGQILGQVKEAYRIAAEVQTAGILLTRLCHTAFSVAKKVKTRTKIMEGAVSVSYAAVELAQKIFSNLSMKKVLLVGAGETGELAAKHMFAKNARNIVITNRTRSKSEALAEELGTNQVLPYESYKEHLHEFDIIITAVSTKEYIISEAEMHAAMLKRRLKPVIILDLGLPRNVDPEVSKVQNMFLKDIDALKHIIDKNLERRSGELPKVHAIIDEELVAFGQWINTLKVRPTIVDLQSKFIEIKEKEIERYRHKVSEEELRRMEHLTDRIMKKILHHPIKMLKAPISTSDSMPSRVDLVRNVFDLEEPNQSH.

Substrate is bound by residues 49 to 52 (TCNR), Ser109, 114 to 116 (EGQ), and Gln120. Catalysis depends on Cys50, which acts as the Nucleophile. Position 189–194 (189–194 (GAGETG)) interacts with NADP(+).

This sequence belongs to the glutamyl-tRNA reductase family. Homodimer.

The catalysed reaction is (S)-4-amino-5-oxopentanoate + tRNA(Glu) + NADP(+) = L-glutamyl-tRNA(Glu) + NADPH + H(+). The protein operates within porphyrin-containing compound metabolism; protoporphyrin-IX biosynthesis; 5-aminolevulinate from L-glutamyl-tRNA(Glu): step 1/2. Its pathway is porphyrin-containing compound metabolism; chlorophyll biosynthesis. Catalyzes the NADPH-dependent reduction of glutamyl-tRNA(Glu) to glutamate 1-semialdehyde (GSA). This chain is Glutamyl-tRNA reductase, found in Chlorobium phaeovibrioides (strain DSM 265 / 1930) (Prosthecochloris vibrioformis (strain DSM 265)).